Here is a 2504-residue protein sequence, read N- to C-terminus: Fatty acid synthase (2504 aa).

At methionine 1 the chain carries N-acetylmethionine. In terms of domain architecture, Ketosynthase family 3 (KS3) spans 1–406 (MEEVVIAGMS…GSNVHVILQP (406 aa)). The residue at position 59 (lysine 59) is an N6-acetyllysine. Serine 63 carries the post-translational modification Phosphoserine. Lysine 70 carries the post-translational modification N6-acetyllysine. Residue cysteine 161 is the For beta-ketoacyl synthase activity of the active site. Serine 207 is subject to Phosphoserine. Histidine 293 functions as the For beta-ketoacyl synthase activity in the catalytic mechanism. An N6-acetyllysine modification is found at lysine 298. The active-site For beta-ketoacyl synthase activity is histidine 331. An acyl and malonyl transferases region spans residues 429–817 (RTLEAVQDLL…INVNPNALFP (389 aa)). The residue at position 528 (lysine 528) is an N6-acetyllysine. Serine 581 acts as the For malonyltransferase activity in catalysis. An acyl-CoA contacts are provided by residues 647–648 (DT) and phenylalanine 671. Lysine 673 is modified (N6-acetyllysine). Serine 725 is modified (phosphoserine). An an acyl-CoA-binding site is contributed by arginine 773. Residue lysine 790 is modified to N6-acetyllysine. An N-terminal hotdog fold region spans residues 844–967 (VPVAEDFPNG…VYLWEDPNSK (124 aa)). In terms of domain architecture, PKS/mFAS DH spans 844–1104 (VPVAEDFPNG…ISRLQTTATS (261 aa)). Histidine 878 acts as the Proton acceptor; for dehydratase activity in catalysis. The interval 982 to 1104 (SVSRLTQGEV…ISRLQTTATS (123 aa)) is C-terminal hotdog fold. Lysine 993 is subject to N6-acetyllysine. The active-site Proton donor; for dehydratase activity is aspartate 1032. N6-acetyllysine is present on residues lysine 1071 and lysine 1276. At cysteine 1464 the chain carries S-nitrosocysteine. Phosphoserine occurs at positions 1577 and 1587. Residues 1628–1856 (DVPSSWTLEE…VQVREEEPEA (229 aa)) are enoyl reductase. 1664 to 1681 (VLIHSGSGGVGQAAISIA) lines the NADP(+) pocket. Residue lysine 1697 is modified to N6-(pyridoxal phosphate)lysine; alternate. Lysine 1697 bears the N6-acetyllysine; alternate mark. 2 positions are modified to N6-acetyllysine: lysine 1764 and lysine 1840. Residues 1857 to 2111 (VLPGAQPTLI…FVLAEKKAVA (255 aa)) are beta-ketoacyl reductase. 1879-1894 (SYIITGGLGGFGLELA) serves as a coordination point for NADP(+). At lysine 1988 the chain carries N6-acetyllysine. An S-nitrosocysteine modification is found at cysteine 2084. In terms of domain architecture, Carrier spans 2112-2192 (HGDGDTQRDL…EMSSKTDSAT (81 aa)). At serine 2150 the chain carries O-(pantetheine 4'-phosphoryl)serine; alternate. A Phosphoserine; alternate modification is found at serine 2150. Residues 2181–2205 (LQEMSSKTDSATDTTAPKSRSDTSL) form a disordered region. The span at 2185-2198 (SSKTDSATDTTAPK) shows a compositional bias: low complexity. Serine 2190 and serine 2229 each carry phosphoserine. The tract at residues 2201-2504 (SDTSLKQNQL…AEPRVSVREG (304 aa)) is thioesterase. The active-site For thioesterase activity is serine 2301. The residue at position 2384 (lysine 2384) is an N6-acetyllysine. Lysine 2442 is covalently cross-linked (Glycyl lysine isopeptide (Lys-Gly) (interchain with G-Cter in SUMO2)). Residue histidine 2474 is the For thioesterase activity of the active site.

Homodimer which is arranged in a head to tail fashion. Interacts with CEACAM1; this interaction is insulin and phosphorylation-dependent; reduces fatty-acid synthase activity. S-nitrosylation of Fatty acid synthase at cysteine residues Cys-1464 or Cys-2084 is important for the enzyme dimerization. In adipocytes, S-nitrosylation of Fatty acid synthase occurs under physiological conditions and gradually increases during adipogenesis.

It localises to the cytoplasm. The protein localises to the melanosome. The catalysed reaction is acetyl-CoA + n malonyl-CoA + 2n NADPH + 2n H(+) = a long-chain fatty acid + (n+1) CoA + n CO2 + 2n NADP(+).. It catalyses the reaction holo-[ACP] + acetyl-CoA = acetyl-[ACP] + CoA. The enzyme catalyses holo-[ACP] + malonyl-CoA = malonyl-[ACP] + CoA. It carries out the reaction a fatty acyl-[ACP] + malonyl-[ACP] + H(+) = a 3-oxoacyl-[ACP] + holo-[ACP] + CO2. The catalysed reaction is a (3R)-hydroxyacyl-[ACP] + NADP(+) = a 3-oxoacyl-[ACP] + NADPH + H(+). It catalyses the reaction a (3R)-hydroxyacyl-[ACP] = a (2E)-enoyl-[ACP] + H2O. The enzyme catalyses a 2,3-saturated acyl-[ACP] + NADP(+) = a (2E)-enoyl-[ACP] + NADPH + H(+). It carries out the reaction hexadecanoyl-[ACP] + H2O = hexadecanoate + holo-[ACP] + H(+). The catalysed reaction is acetyl-[ACP] + malonyl-[ACP] + H(+) = 3-oxobutanoyl-[ACP] + holo-[ACP] + CO2. It catalyses the reaction 3-oxobutanoyl-[ACP] + NADPH + H(+) = (3R)-hydroxybutanoyl-[ACP] + NADP(+). The enzyme catalyses (3R)-hydroxybutanoyl-[ACP] = (2E)-butenoyl-[ACP] + H2O. It carries out the reaction (2E)-butenoyl-[ACP] + NADPH + H(+) = butanoyl-[ACP] + NADP(+). The catalysed reaction is butanoyl-[ACP] + malonyl-[ACP] + H(+) = 3-oxohexanoyl-[ACP] + holo-[ACP] + CO2. It catalyses the reaction 3-oxohexanoyl-[ACP] + NADPH + H(+) = (3R)-hydroxyhexanoyl-[ACP] + NADP(+). The enzyme catalyses (3R)-hydroxyhexanoyl-[ACP] = (2E)-hexenoyl-[ACP] + H2O. It carries out the reaction (2E)-hexenoyl-[ACP] + NADPH + H(+) = hexanoyl-[ACP] + NADP(+). The catalysed reaction is hexanoyl-[ACP] + malonyl-[ACP] + H(+) = 3-oxooctanoyl-[ACP] + holo-[ACP] + CO2. It catalyses the reaction 3-oxooctanoyl-[ACP] + NADPH + H(+) = (3R)-hydroxyoctanoyl-[ACP] + NADP(+). The enzyme catalyses (3R)-hydroxyoctanoyl-[ACP] = (2E)-octenoyl-[ACP] + H2O. It carries out the reaction (2E)-octenoyl-[ACP] + NADPH + H(+) = octanoyl-[ACP] + NADP(+). The catalysed reaction is octanoyl-[ACP] + malonyl-[ACP] + H(+) = 3-oxodecanoyl-[ACP] + holo-[ACP] + CO2. It catalyses the reaction 3-oxodecanoyl-[ACP] + NADPH + H(+) = (3R)-hydroxydecanoyl-[ACP] + NADP(+). The enzyme catalyses (3R)-hydroxydecanoyl-[ACP] = (2E)-decenoyl-[ACP] + H2O. It carries out the reaction (2E)-decenoyl-[ACP] + NADPH + H(+) = decanoyl-[ACP] + NADP(+). The catalysed reaction is decanoyl-[ACP] + malonyl-[ACP] + H(+) = 3-oxododecanoyl-[ACP] + holo-[ACP] + CO2. It catalyses the reaction 3-oxododecanoyl-[ACP] + NADPH + H(+) = (3R)-hydroxydodecanoyl-[ACP] + NADP(+). The enzyme catalyses (3R)-hydroxydodecanoyl-[ACP] = (2E)-dodecenoyl-[ACP] + H2O. It carries out the reaction (2E)-dodecenoyl-[ACP] + NADPH + H(+) = dodecanoyl-[ACP] + NADP(+). The catalysed reaction is dodecanoyl-[ACP] + malonyl-[ACP] + H(+) = 3-oxotetradecanoyl-[ACP] + holo-[ACP] + CO2. It catalyses the reaction 3-oxotetradecanoyl-[ACP] + NADPH + H(+) = (3R)-hydroxytetradecanoyl-[ACP] + NADP(+). The enzyme catalyses (3R)-hydroxytetradecanoyl-[ACP] = (2E)-tetradecenoyl-[ACP] + H2O. It carries out the reaction (2E)-tetradecenoyl-[ACP] + NADPH + H(+) = tetradecanoyl-[ACP] + NADP(+). The catalysed reaction is tetradecanoyl-[ACP] + malonyl-[ACP] + H(+) = 3-oxohexadecanoyl-[ACP] + holo-[ACP] + CO2. It catalyses the reaction 3-oxohexadecanoyl-[ACP] + NADPH + H(+) = (3R)-hydroxyhexadecanoyl-[ACP] + NADP(+). The enzyme catalyses (3R)-hydroxyhexadecanoyl-[ACP] = (2E)-hexadecenoyl-[ACP] + H2O. It carries out the reaction (2E)-hexadecenoyl-[ACP] + NADPH + H(+) = hexadecanoyl-[ACP] + NADP(+). The catalysed reaction is hexadecanoyl-[ACP] + malonyl-[ACP] + H(+) = 3-oxooctadecanoyl-[ACP] + holo-[ACP] + CO2. It catalyses the reaction 3-oxooctadecanoyl-[ACP] + NADPH + H(+) = (3R)-hydroxyoctadecanoyl-[ACP] + NADP(+). The enzyme catalyses (3R)-hydroxyoctadecanoyl-[ACP] = (2E)-octadecenoyl-[ACP] + H2O. It carries out the reaction (2E)-octadecenoyl-[ACP] + NADPH + H(+) = octadecanoyl-[ACP] + NADP(+). The catalysed reaction is tetradecanoyl-[ACP] + H2O = tetradecanoate + holo-[ACP] + H(+). It participates in lipid metabolism; fatty acid biosynthesis. Fatty acid synthetase is a multifunctional enzyme that catalyzes the de novo biosynthesis of long-chain saturated fatty acids starting from acetyl-CoA and malonyl-CoA in the presence of NADPH. This multifunctional protein contains 7 catalytic activities and a site for the binding of the prosthetic group 4'-phosphopantetheine of the acyl carrier protein ([ACP]) domain. This is Fatty acid synthase (Fasn) from Mus musculus (Mouse).